A 360-amino-acid chain; its full sequence is UPF0283 membrane protein Asuc_0957 (360 aa).

The next 3 helical transmembrane spans lie at 74–94 (VIAV…QWLI), 102–122 (WIYF…LSAL), and 215–235 (AVEN…MLFL).

It belongs to the UPF0283 family.

The protein localises to the cell inner membrane. The protein is UPF0283 membrane protein Asuc_0957 of Actinobacillus succinogenes (strain ATCC 55618 / DSM 22257 / CCUG 43843 / 130Z).